We begin with the raw amino-acid sequence, 233 residues long: Tetrahydromethanopterin S-methyltransferase subunit D (233 aa).

Helical transmembrane passes span 4-24 (LLLIGAITAGGVLIGGGVHFV), 39-59 (VGTGTAMLAAGAGLTGLITAA), 67-87 (LMIMAAGAVGSMLMIGITMLV), 133-153 (FVSGIIGGALGGIGGGLIYWA), 166-186 (MGAAGVAAIFAVGIFFINAVI), and 209-229 (GIVACLIASIVAGALSTLLVY).

Belongs to the MtrD family. In terms of assembly, the complex is composed of 8 subunits; MtrA, MtrB, MtrC, MtrD, MtrE, MtrF, MtrG and MtrH.

It localises to the cell membrane. It catalyses the reaction 5-methyl-5,6,7,8-tetrahydromethanopterin + coenzyme M + 2 Na(+)(in) = 5,6,7,8-tetrahydromethanopterin + methyl-coenzyme M + 2 Na(+)(out). Its pathway is one-carbon metabolism; methanogenesis from CO(2); methyl-coenzyme M from 5,10-methylene-5,6,7,8-tetrahydromethanopterin: step 2/2. Its function is as follows. Part of a complex that catalyzes the formation of methyl-coenzyme M and tetrahydromethanopterin from coenzyme M and methyl-tetrahydromethanopterin. This is an energy-conserving, sodium-ion translocating step. The protein is Tetrahydromethanopterin S-methyltransferase subunit D of Methanothermobacter marburgensis (strain ATCC BAA-927 / DSM 2133 / JCM 14651 / NBRC 100331 / OCM 82 / Marburg) (Methanobacterium thermoautotrophicum).